A 261-amino-acid polypeptide reads, in one-letter code: Pantothenate synthetase (261 aa).

ATP is bound at residue 29–36 (MGALHNGH). His36 acts as the Proton donor in catalysis. Position 60 (Gln60) interacts with (R)-pantoate. Position 60 (Gln60) interacts with beta-alanine. 147-150 (GEKD) contributes to the ATP binding site. Gln153 lines the (R)-pantoate pocket. Residue 184-187 (LSSR) participates in ATP binding.

The protein belongs to the pantothenate synthetase family. Homodimer.

It localises to the cytoplasm. The enzyme catalyses (R)-pantoate + beta-alanine + ATP = (R)-pantothenate + AMP + diphosphate + H(+). Its pathway is cofactor biosynthesis; (R)-pantothenate biosynthesis; (R)-pantothenate from (R)-pantoate and beta-alanine: step 1/1. Functionally, catalyzes the condensation of pantoate with beta-alanine in an ATP-dependent reaction via a pantoyl-adenylate intermediate. This is Pantothenate synthetase from Francisella tularensis subsp. mediasiatica (strain FSC147).